A 203-amino-acid polypeptide reads, in one-letter code: LexA repressor (203 aa).

The H-T-H motif DNA-binding region spans 32–52 (RAEICTAFGFRSPNAAETHLR). Active-site for autocatalytic cleavage activity residues include Ser-121 and Lys-158.

The protein belongs to the peptidase S24 family. As to quaternary structure, homodimer.

The enzyme catalyses Hydrolysis of Ala-|-Gly bond in repressor LexA.. Functionally, represses a number of genes involved in the response to DNA damage (SOS response), including recA and lexA. In the presence of single-stranded DNA, RecA interacts with LexA causing an autocatalytic cleavage which disrupts the DNA-binding part of LexA, leading to derepression of the SOS regulon and eventually DNA repair. The sequence is that of LexA repressor from Aromatoleum aromaticum (strain DSM 19018 / LMG 30748 / EbN1) (Azoarcus sp. (strain EbN1)).